Here is a 60-residue protein sequence, read N- to C-terminus: Chromatin protein Cren7 (60 aa).

Belongs to the Cren7 family. In terms of assembly, monomer. In terms of processing, methylated at multiple sites, to varying extents.

The protein resides in the chromosome. Its subcellular location is the cytoplasm. In terms of biological role, a chromatin protein, binds double-stranded DNA without sequence specificity. Constrains negative DNA supercoils. This chain is Chromatin protein Cren7, found in Saccharolobus islandicus (strain M.16.4 / Kamchatka #3) (Sulfolobus islandicus).